An 88-amino-acid chain; its full sequence is Small ribosomal subunit protein uS15 (88 aa).

The protein belongs to the universal ribosomal protein uS15 family. In terms of assembly, part of the 30S ribosomal subunit. Forms a bridge to the 50S subunit in the 70S ribosome, contacting the 23S rRNA.

Its function is as follows. One of the primary rRNA binding proteins, it binds directly to 16S rRNA where it helps nucleate assembly of the platform of the 30S subunit by binding and bridging several RNA helices of the 16S rRNA. Functionally, forms an intersubunit bridge (bridge B4) with the 23S rRNA of the 50S subunit in the ribosome. In Methylacidiphilum infernorum (isolate V4) (Methylokorus infernorum (strain V4)), this protein is Small ribosomal subunit protein uS15.